Reading from the N-terminus, the 422-residue chain is S-adenosylmethionine synthase (422 aa).

His15 serves as a coordination point for ATP. Asp17 serves as a coordination point for Mg(2+). K(+) is bound at residue Glu43. 2 residues coordinate L-methionine: Glu56 and Gln99. The segment at 99–109 (QSPDISRGVTE) is flexible loop. Residues 166 to 168 (DGK), 232 to 233 (RF), Asp241, 247 to 248 (RK), Ala264, and Lys268 contribute to the ATP site. An L-methionine-binding site is contributed by Asp241. Residue Lys272 participates in L-methionine binding. The tract at residues 390–422 (AVPATTNGAGSKNGSGSKKEPKRKGKKETGAQA) is disordered.

The protein belongs to the AdoMet synthase family. In terms of assembly, homotetramer; dimer of dimers. The cofactor is Mg(2+). Requires K(+) as cofactor.

The protein resides in the cytoplasm. The enzyme catalyses L-methionine + ATP + H2O = S-adenosyl-L-methionine + phosphate + diphosphate. The protein operates within amino-acid biosynthesis; S-adenosyl-L-methionine biosynthesis; S-adenosyl-L-methionine from L-methionine: step 1/1. Functionally, catalyzes the formation of S-adenosylmethionine (AdoMet) from methionine and ATP. The overall synthetic reaction is composed of two sequential steps, AdoMet formation and the subsequent tripolyphosphate hydrolysis which occurs prior to release of AdoMet from the enzyme. The chain is S-adenosylmethionine synthase from Sorangium cellulosum (strain So ce56) (Polyangium cellulosum (strain So ce56)).